The primary structure comprises 217 residues: Small ribosomal subunit protein uS3 (217 aa).

The 69-residue stretch at 38–106 folds into the KH type-2 domain; it reads IRKFINKELA…QVHINIIEIK (69 aa).

This sequence belongs to the universal ribosomal protein uS3 family. As to quaternary structure, part of the 30S ribosomal subunit. Forms a tight complex with proteins S10 and S14.

Binds the lower part of the 30S subunit head. Binds mRNA in the 70S ribosome, positioning it for translation. The chain is Small ribosomal subunit protein uS3 from Streptococcus equi subsp. equi (strain 4047).